A 206-amino-acid polypeptide reads, in one-letter code: MQVELLNDQGLSSSKVDVSDTVFGREYNESLIHQVIVAFQANARQGTRAQKDREQVRHSTKKPFKQKGTGRARAGMTSSPLWRGGGRIFPNMPDENFTHKINKKMYRAGMASIFSQLAREGRLAVVDSLTVDSPKTKVLADKFKAMNLNSVLVIADQVDENLYLASRNLVNILVVEPRYADPLSLVHYKKVLVTKAAMDQLKEMFA.

The segment at 46–77 is disordered; sequence GTRAQKDREQVRHSTKKPFKQKGTGRARAGMT. Positions 58 to 70 are enriched in basic residues; that stretch reads HSTKKPFKQKGTG.

This sequence belongs to the universal ribosomal protein uL4 family. Part of the 50S ribosomal subunit.

One of the primary rRNA binding proteins, this protein initially binds near the 5'-end of the 23S rRNA. It is important during the early stages of 50S assembly. It makes multiple contacts with different domains of the 23S rRNA in the assembled 50S subunit and ribosome. Functionally, forms part of the polypeptide exit tunnel. The sequence is that of Large ribosomal subunit protein uL4 from Polaromonas naphthalenivorans (strain CJ2).